Here is a 314-residue protein sequence, read N- to C-terminus: Nerylneryl diphosphate synthase CPT2, chloroplastic (314 aa).

A chloroplast-targeting transit peptide spans 1–61 (MNSSIVSQHF…MSDRGLSKIS (61 aa)). The active site involves aspartate 97.

The protein belongs to the UPP synthase family. Mg(2+) is required as a cofactor. Expressed in stems. Expressed in petiolules. Expressed at low levels in leaf trichomes, old leaf and roots.

It localises to the plastid. The protein resides in the chloroplast. The catalysed reaction is 3 isopentenyl diphosphate + dimethylallyl diphosphate = nerylneryl diphosphate + 3 diphosphate. It carries out the reaction isopentenyl diphosphate + dimethylallyl diphosphate = neryl diphosphate + diphosphate. It catalyses the reaction neryl diphosphate + isopentenyl diphosphate = (2Z,6Z)-farnesyl diphosphate + diphosphate. The enzyme catalyses (2Z,6Z)-farnesyl diphosphate + isopentenyl diphosphate = nerylneryl diphosphate + diphosphate. Uses dimethylallyl diphosphate and isopentenyl diphosphate to catalyze the cis-prenyl chain elongation and produce the 20 carbon product nerylneryl diphosphate. The polypeptide is Nerylneryl diphosphate synthase CPT2, chloroplastic (Solanum lycopersicum (Tomato)).